The chain runs to 420 residues: 3-phosphoshikimate 1-carboxyvinyltransferase (420 aa).

3-phosphoshikimate-binding residues include Lys-20, Ser-21, and Arg-25. Position 20 (Lys-20) interacts with phosphoenolpyruvate. Arg-119 contributes to the phosphoenolpyruvate binding site. 3-phosphoshikimate is bound by residues Ser-161, Ser-162, Gln-163, Ser-189, Asp-303, Gln-326, and Lys-330. Residue Gln-163 coordinates phosphoenolpyruvate. Asp-303 functions as the Proton acceptor in the catalytic mechanism. The phosphoenolpyruvate site is built by Arg-334, Arg-375, and Lys-400.

It belongs to the EPSP synthase family. In terms of assembly, monomer.

It localises to the cytoplasm. It carries out the reaction 3-phosphoshikimate + phosphoenolpyruvate = 5-O-(1-carboxyvinyl)-3-phosphoshikimate + phosphate. It functions in the pathway metabolic intermediate biosynthesis; chorismate biosynthesis; chorismate from D-erythrose 4-phosphate and phosphoenolpyruvate: step 6/7. Catalyzes the transfer of the enolpyruvyl moiety of phosphoenolpyruvate (PEP) to the 5-hydroxyl of shikimate-3-phosphate (S3P) to produce enolpyruvyl shikimate-3-phosphate and inorganic phosphate. The chain is 3-phosphoshikimate 1-carboxyvinyltransferase from Dehalococcoides mccartyi (strain ATCC BAA-2266 / KCTC 15142 / 195) (Dehalococcoides ethenogenes (strain 195)).